Consider the following 463-residue polypeptide: NEDD8-activating enzyme E1 catalytic subunit (463 aa).

The residue at position 2 (Ala2) is an N-acetylalanine. Positions 53 to 70 (HPDFEPSTESLQFLLDTC) are interaction with UBE2M N-terminus. ATP is bound by residues 100 to 124 (DMDT…GRPK) and 148 to 171 (IQDF…SIIA). Interaction with UBE2M N-terminus stretches follow at residues 157–161 (RQFHI) and 192–217 (PSSI…LPGM). Positions 227–229 (LYP) are interaction with NEDD8. Residue Cys237 is the Glycyl thioester intermediate of the active site. 2 interaction with NAE1 regions span residues 242–248 (MPRLPEH) and 292–295 (YNIR). An interaction with UBE2M N-terminus region spans residues 331 to 338 (IATSAYIP). The segment at 352-357 (YTYTFE) is interaction with NEDD8. The interaction with UBE2M core domain stretch occupies residues 368-463 (SQLPQNIQFS…TVLFKLHFTS (96 aa)).

Belongs to the ubiquitin-activating E1 family. UBA3 subfamily. Heterodimer of UBA3 and NAE1. Interacts with NEDD8, UBE2F and UBE2M. Binds ESR1 and ESR2 with bound steroid ligand. Interacts with TBATA. As to expression, ubiquitously expressed.

The catalysed reaction is ATP + [NEDD8 protein] + [E1 NEDD8-activating enzyme]-L-cysteine = AMP + diphosphate + [E1 NEDD8-activating enzyme]-S-[NEDD8 protein]-yl-L-cysteine.. It participates in protein modification; protein neddylation. Its activity is regulated as follows. Binding of TP53BP2 to the regulatory subunit NAE1 decreases activity. Functionally, catalytic subunit of the dimeric UBA3-NAE1 E1 enzyme. E1 activates NEDD8 by first adenylating its C-terminal glycine residue with ATP, thereafter linking this residue to the side chain of the catalytic cysteine, yielding a NEDD8-UBA3 thioester and free AMP. E1 finally transfers NEDD8 to the catalytic cysteine of UBE2M. Down-regulates steroid receptor activity. Necessary for cell cycle progression. The protein is NEDD8-activating enzyme E1 catalytic subunit (UBA3) of Homo sapiens (Human).